A 268-amino-acid chain; its full sequence is Type III pantothenate kinase 1 (268 aa).

6–13 (DIGNTNIT) is an ATP binding site. Substrate-binding positions include tyrosine 100 and 107–110 (GTDR). Aspartate 109 (proton acceptor) is an active-site residue. Aspartate 133 provides a ligand contact to K(+). Threonine 136 is an ATP binding site.

This sequence belongs to the type III pantothenate kinase family. Homodimer. NH4(+) is required as a cofactor. The cofactor is K(+).

It localises to the cytoplasm. It catalyses the reaction (R)-pantothenate + ATP = (R)-4'-phosphopantothenate + ADP + H(+). It functions in the pathway cofactor biosynthesis; coenzyme A biosynthesis; CoA from (R)-pantothenate: step 1/5. Functionally, catalyzes the phosphorylation of pantothenate (Pan), the first step in CoA biosynthesis. The sequence is that of Type III pantothenate kinase 1 from Symbiobacterium thermophilum (strain DSM 24528 / JCM 14929 / IAM 14863 / T).